The primary structure comprises 248 residues: tRNA pseudouridine synthase A (248 aa).

D53 functions as the Nucleophile in the catalytic mechanism. Y116 contacts substrate.

Belongs to the tRNA pseudouridine synthase TruA family. As to quaternary structure, homodimer.

It catalyses the reaction uridine(38/39/40) in tRNA = pseudouridine(38/39/40) in tRNA. In terms of biological role, formation of pseudouridine at positions 38, 39 and 40 in the anticodon stem and loop of transfer RNAs. This chain is tRNA pseudouridine synthase A, found in Helicobacter hepaticus (strain ATCC 51449 / 3B1).